A 62-amino-acid chain; its full sequence is uncharacterized protein (62 aa).

This is an uncharacterized protein from Archaeoglobus fulgidus (strain ATCC 49558 / DSM 4304 / JCM 9628 / NBRC 100126 / VC-16).